The sequence spans 164 residues: Protein PPLZ02 (164 aa).

Positions 7-64 (RYRGFRQRHWGSWVSEIRHSILKTRIWQGTFESAEDAARAYDEAARLMCGTRARTNFP) form a DNA-binding region, AP2/ERF.

It localises to the nucleus. Essential for all lupin cells independent of the respective tissue. This chain is Protein PPLZ02 (PPLZ02), found in Lupinus polyphyllus (Large-leaved lupine).